Here is a 337-residue protein sequence, read N- to C-terminus: uncharacterized protein (337 aa).

In terms of domain architecture, AFP-like spans 279–337 (SIVAKRNIKKGEYLSVDNISFKRPGRGIETKYLSIILNRKIKNDKEEDDIIYWDDLLGD).

It to B.subtilis SpsE.

This is an uncharacterized protein from Methanocaldococcus jannaschii (strain ATCC 43067 / DSM 2661 / JAL-1 / JCM 10045 / NBRC 100440) (Methanococcus jannaschii).